We begin with the raw amino-acid sequence, 293 residues long: ATP synthase gamma chain (293 aa).

The protein belongs to the ATPase gamma chain family. In terms of assembly, F-type ATPases have 2 components, CF(1) - the catalytic core - and CF(0) - the membrane proton channel. CF(1) has five subunits: alpha(3), beta(3), gamma(1), delta(1), epsilon(1). CF(0) has three main subunits: a, b and c.

Its subcellular location is the cell membrane. Its function is as follows. Produces ATP from ADP in the presence of a proton gradient across the membrane. The gamma chain is believed to be important in regulating ATPase activity and the flow of protons through the CF(0) complex. This is ATP synthase gamma chain from Streptococcus gordonii (strain Challis / ATCC 35105 / BCRC 15272 / CH1 / DL1 / V288).